Reading from the N-terminus, the 401-residue chain is MTERNIAIEAANRDAVEDQRVEIVERKGIGHPDSICDGIAETVSRALSQLYLDRVGHVLHYNTDETQLVAGESIPDFDGGEVVEPIYILIVGRATKKYNGQRLPVDSTAVSAARTYLRENIPALTLGTDVIVDVRLGQGSGDLKDVFGENNVEIPMANDTSFGVGHAPLTETEKIVQAVEMQLNGPYADNHPVIGPDIKVMGKRENNSIDITVAAAMIDRYVADLEDYADAIENIRAFVTDVAHRHTNREVTVAVNTADDYDTGSIYLTVTGTSAEMGDDGSVGRGNRANGLITPNRPMSMEATSGKNPVNHIGKIYNLLSTDIAESVVADVDGIRDLQIRLLSQIGRPIDEPHIADAKIVTESNVNLQAIEPEIRAIIDNRLADVTSITERVINDELTTF.

Residue 137-142 participates in ATP binding; that stretch reads GQGSGD.

The protein belongs to the AdoMet synthase 2 family. Mg(2+) serves as cofactor.

It carries out the reaction L-methionine + ATP + H2O = S-adenosyl-L-methionine + phosphate + diphosphate. The protein operates within amino-acid biosynthesis; S-adenosyl-L-methionine biosynthesis; S-adenosyl-L-methionine from L-methionine: step 1/1. Its function is as follows. Catalyzes the formation of S-adenosylmethionine from methionine and ATP. In Haloquadratum walsbyi (strain DSM 16790 / HBSQ001), this protein is S-adenosylmethionine synthase.